The sequence spans 379 residues: Ribosomal RNA large subunit methyltransferase G (379 aa).

It belongs to the methyltransferase superfamily. RlmG family.

It is found in the cytoplasm. It catalyses the reaction guanosine(1835) in 23S rRNA + S-adenosyl-L-methionine = N(2)-methylguanosine(1835) in 23S rRNA + S-adenosyl-L-homocysteine + H(+). Its function is as follows. Specifically methylates the guanine in position 1835 (m2G1835) of 23S rRNA. The sequence is that of Ribosomal RNA large subunit methyltransferase G from Serratia proteamaculans (strain 568).